We begin with the raw amino-acid sequence, 480 residues long: Glutamyl-tRNA(Gln) amidotransferase subunit A (480 aa).

Catalysis depends on charge relay system residues K76 and S151. The Acyl-ester intermediate role is filled by S175.

This sequence belongs to the amidase family. GatA subfamily. As to quaternary structure, heterotrimer of A, B and C subunits.

It carries out the reaction L-glutamyl-tRNA(Gln) + L-glutamine + ATP + H2O = L-glutaminyl-tRNA(Gln) + L-glutamate + ADP + phosphate + H(+). In terms of biological role, allows the formation of correctly charged Gln-tRNA(Gln) through the transamidation of misacylated Glu-tRNA(Gln) in organisms which lack glutaminyl-tRNA synthetase. The reaction takes place in the presence of glutamine and ATP through an activated gamma-phospho-Glu-tRNA(Gln). This is Glutamyl-tRNA(Gln) amidotransferase subunit A from Exiguobacterium sibiricum (strain DSM 17290 / CCUG 55495 / CIP 109462 / JCM 13490 / 255-15).